Consider the following 160-residue polypeptide: Transcriptional regulator MraZ (160 aa).

SpoVT-AbrB domains lie at 5-50 and 93-136; these read KFET…EGVY and AIEC…SQAE.

It belongs to the MraZ family. As to quaternary structure, forms oligomers.

It is found in the cytoplasm. Its subcellular location is the nucleoid. The polypeptide is Transcriptional regulator MraZ (Geotalea uraniireducens (strain Rf4) (Geobacter uraniireducens)).